The following is a 136-amino-acid chain: Keratin-associated protein 15-1 (136 aa).

It belongs to the PMG family. In terms of assembly, interacts with hair keratins.

Functionally, in the hair cortex, hair keratin intermediate filaments are embedded in an interfilamentous matrix, consisting of hair keratin-associated proteins (KRTAP), which are essential for the formation of a rigid and resistant hair shaft through their extensive disulfide bond cross-linking with abundant cysteine residues of hair keratins. The matrix proteins include the high-sulfur and high-glycine-tyrosine keratins. This Capra hircus (Goat) protein is Keratin-associated protein 15-1 (KRTAP15-1).